Reading from the N-terminus, the 230-residue chain is Somatolactin (230 aa).

Residues 1–23 form the signal peptide; sequence MNMMTVKQGVWAALLWPYLLAAS. 3 cysteine pairs are disulfide-bonded: Cys28-Cys38, Cys88-Cys204, and Cys221-Cys229. N-linked (GlcNAc...) asparagine glycosylation is found at Asn137 and Asn144.

It belongs to the somatotropin/prolactin family.

The protein localises to the secreted. This Hippoglossus hippoglossus (Atlantic halibut) protein is Somatolactin.